A 319-amino-acid chain; its full sequence is Acetyl-coenzyme A carboxylase carboxyl transferase subunit alpha (319 aa).

Residues 35-296 (NIDEEVQRLR…KTQLLADLED (262 aa)) form the CoA carboxyltransferase C-terminal domain.

It belongs to the AccA family. Acetyl-CoA carboxylase is a heterohexamer composed of biotin carboxyl carrier protein (AccB), biotin carboxylase (AccC) and two subunits each of ACCase subunit alpha (AccA) and ACCase subunit beta (AccD).

It is found in the cytoplasm. The enzyme catalyses N(6)-carboxybiotinyl-L-lysyl-[protein] + acetyl-CoA = N(6)-biotinyl-L-lysyl-[protein] + malonyl-CoA. It participates in lipid metabolism; malonyl-CoA biosynthesis; malonyl-CoA from acetyl-CoA: step 1/1. Component of the acetyl coenzyme A carboxylase (ACC) complex. First, biotin carboxylase catalyzes the carboxylation of biotin on its carrier protein (BCCP) and then the CO(2) group is transferred by the carboxyltransferase to acetyl-CoA to form malonyl-CoA. This Edwardsiella ictaluri (strain 93-146) protein is Acetyl-coenzyme A carboxylase carboxyl transferase subunit alpha.